A 305-amino-acid chain; its full sequence is tRNA pseudouridine synthase B (305 aa).

Aspartate 39 (nucleophile) is an active-site residue.

It belongs to the pseudouridine synthase TruB family. Type 1 subfamily.

The catalysed reaction is uridine(55) in tRNA = pseudouridine(55) in tRNA. Its function is as follows. Responsible for synthesis of pseudouridine from uracil-55 in the psi GC loop of transfer RNAs. The sequence is that of tRNA pseudouridine synthase B from Staphylococcus epidermidis (strain ATCC 35984 / DSM 28319 / BCRC 17069 / CCUG 31568 / BM 3577 / RP62A).